The primary structure comprises 244 residues: tRNA uridine(34) hydroxylase (244 aa).

Positions 129–219 (QGRELVMLDT…GILKYFEETD (91 aa)) constitute a Rhodanese domain. Catalysis depends on C183, which acts as the Cysteine persulfide intermediate.

Belongs to the TrhO family.

It catalyses the reaction uridine(34) in tRNA + AH2 + O2 = 5-hydroxyuridine(34) in tRNA + A + H2O. Catalyzes oxygen-dependent 5-hydroxyuridine (ho5U) modification at position 34 in tRNAs. The protein is tRNA uridine(34) hydroxylase of Bordetella bronchiseptica (strain ATCC BAA-588 / NCTC 13252 / RB50) (Alcaligenes bronchisepticus).